The chain runs to 398 residues: Phosphoglycerate kinase (398 aa).

Substrate contacts are provided by residues 21–23, arginine 36, 59–62, arginine 119, and arginine 157; these read DFN and HLGR. ATP contacts are provided by residues lysine 208, glycine 296, glutamate 327, and 354-357; that span reads GGDS.

This sequence belongs to the phosphoglycerate kinase family. In terms of assembly, monomer.

Its subcellular location is the cytoplasm. The enzyme catalyses (2R)-3-phosphoglycerate + ATP = (2R)-3-phospho-glyceroyl phosphate + ADP. It participates in carbohydrate degradation; glycolysis; pyruvate from D-glyceraldehyde 3-phosphate: step 2/5. In Lactococcus lactis subsp. cremoris (strain SK11), this protein is Phosphoglycerate kinase.